We begin with the raw amino-acid sequence, 310 residues long: Small ribosomal subunit biogenesis GTPase RsgA (310 aa).

In terms of domain architecture, CP-type G spans 77–238 (LSKQSHILAA…IIDTPGIKGF (162 aa)). Residues 126-129 (NKVD) and 180-188 (GHSGVGKST) each bind GTP. Zn(2+)-binding residues include Cys-262, Cys-267, His-269, and Cys-275.

It belongs to the TRAFAC class YlqF/YawG GTPase family. RsgA subfamily. Monomer. Associates with 30S ribosomal subunit, binds 16S rRNA. It depends on Zn(2+) as a cofactor.

The protein localises to the cytoplasm. Its function is as follows. One of several proteins that assist in the late maturation steps of the functional core of the 30S ribosomal subunit. Helps release RbfA from mature subunits. May play a role in the assembly of ribosomal proteins into the subunit. Circularly permuted GTPase that catalyzes slow GTP hydrolysis, GTPase activity is stimulated by the 30S ribosomal subunit. In Bacteroides fragilis (strain YCH46), this protein is Small ribosomal subunit biogenesis GTPase RsgA.